Here is a 133-residue protein sequence, read N- to C-terminus: Large ribosomal subunit protein eL32y (133 aa).

It belongs to the eukaryotic ribosomal protein eL32 family.

The chain is Large ribosomal subunit protein eL32y (RPL32B) from Arabidopsis thaliana (Mouse-ear cress).